Reading from the N-terminus, the 284-residue chain is 2-dehydro-3-deoxyphosphooctonate aldolase (284 aa).

Belongs to the KdsA family.

The protein resides in the cytoplasm. The enzyme catalyses D-arabinose 5-phosphate + phosphoenolpyruvate + H2O = 3-deoxy-alpha-D-manno-2-octulosonate-8-phosphate + phosphate. The protein operates within carbohydrate biosynthesis; 3-deoxy-D-manno-octulosonate biosynthesis; 3-deoxy-D-manno-octulosonate from D-ribulose 5-phosphate: step 2/3. It functions in the pathway bacterial outer membrane biogenesis; lipopolysaccharide biosynthesis. In Photobacterium profundum (strain SS9), this protein is 2-dehydro-3-deoxyphosphooctonate aldolase.